The chain runs to 131 residues: MATRTQARESVIGLLYAYDLGNDGITKFVDEILEEKKIRNNQKDFALNLFNGTIKNLSQIDENIVSNLNQGTLSDIGSVEKSILRLAIYEILFESLPKAIIINEAIELSKRLASDGAPKFINGLLDKIVKA.

The protein belongs to the NusB family.

Its function is as follows. Involved in transcription antitermination. Required for transcription of ribosomal RNA (rRNA) genes. Binds specifically to the boxA antiterminator sequence of the ribosomal RNA (rrn) operons. This is Transcription antitermination protein NusB from Aliarcobacter butzleri (strain RM4018) (Arcobacter butzleri).